A 187-amino-acid polypeptide reads, in one-letter code: Imidazoleglycerol-phosphate dehydratase (187 aa).

Belongs to the imidazoleglycerol-phosphate dehydratase family.

Its subcellular location is the cytoplasm. The enzyme catalyses D-erythro-1-(imidazol-4-yl)glycerol 3-phosphate = 3-(imidazol-4-yl)-2-oxopropyl phosphate + H2O. It participates in amino-acid biosynthesis; L-histidine biosynthesis; L-histidine from 5-phospho-alpha-D-ribose 1-diphosphate: step 6/9. This Pyrobaculum calidifontis (strain DSM 21063 / JCM 11548 / VA1) protein is Imidazoleglycerol-phosphate dehydratase.